The chain runs to 158 residues: Cyclic pyranopterin monophosphate synthase (158 aa).

Residues 75-77 (LCH) and 113-114 (ME) each bind substrate. Aspartate 128 is an active-site residue.

This sequence belongs to the MoaC family. In terms of assembly, homohexamer; trimer of dimers.

The catalysed reaction is (8S)-3',8-cyclo-7,8-dihydroguanosine 5'-triphosphate = cyclic pyranopterin phosphate + diphosphate. Its pathway is cofactor biosynthesis; molybdopterin biosynthesis. Catalyzes the conversion of (8S)-3',8-cyclo-7,8-dihydroguanosine 5'-triphosphate to cyclic pyranopterin monophosphate (cPMP). This chain is Cyclic pyranopterin monophosphate synthase, found in Acidiphilium cryptum (strain JF-5).